The sequence spans 1290 residues: DNA-directed RNA polymerase subunit beta' (1290 aa).

The Zn(2+) site is built by cysteine 68, cysteine 70, cysteine 83, and cysteine 86. Mg(2+)-binding residues include aspartate 530, aspartate 532, and aspartate 534. Zn(2+)-binding residues include cysteine 909, cysteine 985, cysteine 992, and cysteine 995.

The protein belongs to the RNA polymerase beta' chain family. As to quaternary structure, the RNAP catalytic core consists of 2 alpha, 1 beta, 1 beta' and 1 omega subunit. When a sigma factor is associated with the core the holoenzyme is formed, which can initiate transcription. Mg(2+) is required as a cofactor. Requires Zn(2+) as cofactor.

The enzyme catalyses RNA(n) + a ribonucleoside 5'-triphosphate = RNA(n+1) + diphosphate. Functionally, DNA-dependent RNA polymerase catalyzes the transcription of DNA into RNA using the four ribonucleoside triphosphates as substrates. This chain is DNA-directed RNA polymerase subunit beta', found in Mycoplasma pneumoniae (strain ATCC 29342 / M129 / Subtype 1) (Mycoplasmoides pneumoniae).